Consider the following 349-residue polypeptide: tRNA pseudouridine synthase D (349 aa).

Residue phenylalanine 27 participates in substrate binding. The Nucleophile role is filled by aspartate 80. Asparagine 129 is a substrate binding site. Residues 155–303 (GVPNYFGAQR…VEASRRAMLL (149 aa)) enclose the TRUD domain. Phenylalanine 329 contributes to the substrate binding site.

It belongs to the pseudouridine synthase TruD family.

The enzyme catalyses uridine(13) in tRNA = pseudouridine(13) in tRNA. Its function is as follows. Responsible for synthesis of pseudouridine from uracil-13 in transfer RNAs. The sequence is that of tRNA pseudouridine synthase D from Salmonella dublin (strain CT_02021853).